The sequence spans 532 residues: Putative cysteine desulfurase PbSufS (532 aa).

Positions 1-18 are cleaved as a signal peptide; it reads MNNESICILLLLFVKITS. N6-(pyridoxal phosphate)lysine is present on lysine 286. Cysteine 480 (cysteine persulfide intermediate) is an active-site residue.

Belongs to the class-V pyridoxal-phosphate-dependent aminotransferase family. Csd subfamily. In terms of assembly, monomer. Interacts with SufE; interaction enhances cysteine desulfurase activity of SufS. Requires pyridoxal 5'-phosphate as cofactor.

It localises to the plastid. Its subcellular location is the apicoplast. It catalyses the reaction (sulfur carrier)-H + L-cysteine = (sulfur carrier)-SH + L-alanine. The protein operates within cofactor biosynthesis; iron-sulfur cluster biosynthesis. Functionally, catalyzes sulfur activation and mobilization in sulfur mobilization (SUF) pathway for iron-sulfur (Fe-S) cluster biogenesis. Active when in complex with a partner protein SufE. Required for apicoplast maintenance. Plays a role in the development of sporozoites in oocysts in mosquitoes. This chain is Putative cysteine desulfurase PbSufS, found in Plasmodium berghei (strain Anka).